Reading from the N-terminus, the 1178-residue chain is Thrombospondin-2 (1178 aa).

Positions 1 to 22 (MLQRSRLLWLAVFITLWVSSDA) are cleaved as a signal peptide. Residues 25–221 (DAKEEENTFD…LQNIHLIFDT (197 aa)) form the Laminin G-like domain. N-linked (GlcNAc...) asparagine glycosylation is found at Asn157, Asn244, Asn317, and Asn322. Positions 324–381 (SVCWQDGRVFADSESWIVDSCTKCTCQDSKIVCHQITCPPVSCADPSFIEGECCPVCS) constitute a VWFC domain. 3 TSP type-1 domains span residues 387-437 (EEGW…KKCD), 443-498 (DGGW…APCP), and 500-555 (NGQW…RDCP). Disulfide bonds link Cys399–Cys431, Cys403–Cys436, Cys414–Cys421, Cys455–Cys492, Cys459–Cys497, Cys470–Cys482, Cys512–Cys549, Cys516–Cys554, Cys527–Cys539, Cys559–Cys570, Cys564–Cys580, Cys583–Cys594, Cys600–Cys616, Cys607–Cys625, Cys628–Cys652, Cys658–Cys671, Cys665–Cys684, Cys686–Cys697, Cys713–Cys721, Cys726–Cys746, Cys762–Cys782, Cys785–Cys805, Cys821–Cys841, Cys844–Cys864, Cys882–Cys902, Cys918–Cys938, and Cys954–Cys1175. Asn463 is a glycosylation site (N-linked (GlcNAc...) asparagine). An EGF-like 1 domain is found at 555–595 (PIDGCLSNPCFPGAECNSYPDGSWSCGPCPAGFLGNGTVCE). A glycan (N-linked (GlcNAc...) asparagine) is linked at Asn590. One can recognise an EGF-like 2 domain in the interval 654–698 (PENPCKDKTHSCHKSAECIYLGHFSDPMYKCECRTGYAGDGRICG). 8 TSP type-3 repeats span residues 699–734 (EDSDLDGWPNNNLVCAANATYHCVKDNCPLLPNSGQ), 735–770 (EDFDKDGKGDACDEDDDNDGVEDDKDNCPLLFNPRQ), 771–793 (FDYDKDEVGDRCDNCPYVHNPAQ), 794–829 (IDTDNNGEGDSCAVDIDGDDIFNERDNCPYVYNTDQ), 830–852 (SDTDGDGVGDQCDNCPLMHNPDQ), 853–890 (TDADNDLVGDQCDNNEDIDEDGHQNNQDNCPYIPNANQ), 891–926 (ADHDKDGKGDACDPDDDNDGIPDDRDNCRLRYNPEQ), and 927–962 (EDSDGDGRGDICKDDFDDDNVPDIFDVCPENNAISE). The N-linked (GlcNAc...) asparagine glycan is linked to Asn716. The interval 737 to 760 (FDKDGKGDACDEDDDNDGVEDDKD) is disordered. The segment covering 746-759 (CDEDDDNDGVEDDK) has biased composition (acidic residues). The interval 852–941 (QTDADNDLVG…DGRGDICKDD (90 aa)) is disordered. Residues 853–872 (TDADNDLVGDQCDNNEDIDE) are compositionally biased toward acidic residues. A compositionally biased stretch (basic and acidic residues) spans 891–901 (ADHDKDGKGDA). A compositionally biased stretch (acidic residues) spans 902-911 (CDPDDDNDGI). Basic and acidic residues-rich tracts occupy residues 912 to 924 (PDDRDNCRLRYNP) and 931 to 940 (GDGRGDICKD). The Cell attachment site signature appears at 934–936 (RGD). The region spanning 966-1178 (RKFQMVPLDP…SDLKYECRDA (213 aa)) is the TSP C-terminal domain. Residue Asn1075 is glycosylated (N-linked (GlcNAc...) asparagine).

The protein belongs to the thrombospondin family. Homotrimer; disulfide-linked. Can bind to fibrinogen, fibronectin, laminin and type V collagen.

Adhesive glycoprotein that mediates cell-to-cell and cell-to-matrix interactions. The polypeptide is Thrombospondin-2 (THBS2) (Gallus gallus (Chicken)).